The chain runs to 30 residues: Snaclec carinactivase-1 regulatory subunit 14 kDa chain (30 aa).

One can recognise a C-type lectin domain in the interval 1 to 30; it reads DCLPDWFHYEGHCYRVFDEPKKWADAEKFC. A disulfide bridge links Cys2 with Cys13.

It belongs to the snaclec family. In terms of assembly, heterodimer of a metalloproteinase subunit and a regulatory subunit comprising two polypeptides disulfide-linked (14 kDa and 17 kDa chains). Expressed by the venom gland.

Its subcellular location is the secreted. In terms of biological role, calcium-dependent prothrombin activator. This protein may activate prothrombin via recognition by the regulatory subunit of the calcium ion bound conformation of its gamma-carboxyglutamic acid (GLA) domain, and the subsequent conversion of prothrombin to active thrombin is catalyzed by the catalytic subunit. The polypeptide is Snaclec carinactivase-1 regulatory subunit 14 kDa chain (Echis carinatus (Saw-scaled viper)).